The chain runs to 173 residues: METLHHPLVKMEEDYALSSDSEPNSTCMANTWDWKSHNESYSLSQTPSPQSVSPAASYESTYSSSPHTGQGLEEMPFSYSLLQYPTLCHGDNGALTKKDHGHKTSMTTHRRRKASEREKLRMRAIAEALHTLRNNLPPMYSQGRQPLTKIQTLKCTINYISELTNLLQCSKRA.

Over residues E39–T68 the composition is skewed to polar residues. Disordered stretches follow at residues E39–G69 and T96–R117. Residues D99–A114 are compositionally biased toward basic residues. The bHLH domain occupies H109–L163.

It localises to the nucleus. Functionally, involved in specifying the paraxial, but not dorsal, mesoderm. May regulate the expression of T-box transcription factors required for mesoderm formation and differentiation, such as brachyury T, wnt8, vegt and eomes. The sequence is that of Mesogenin-1 (msgn1) from Xenopus laevis (African clawed frog).